Consider the following 549-residue polypeptide: 4-hydroxybutyrate--CoA ligase 2 (549 aa).

ATP contacts are provided by residues Thr-195–Lys-203, Glu-336–His-341, Asp-425, and Arg-440. Residues Gly-448–Glu-450, Lys-506, and Cys-514–Lys-516 each bind CoA. Lys-530 provides a ligand contact to ATP.

This sequence belongs to the ATP-dependent AMP-binding enzyme family. The cofactor is Mg(2+). Requires Mn(2+) as cofactor.

It catalyses the reaction 4-hydroxybutanoate + ATP + CoA = 4-hydroxybutanoyl-CoA + AMP + diphosphate. The catalysed reaction is acetate + ATP + CoA = acetyl-CoA + AMP + diphosphate. The enzyme catalyses propanoate + ATP + CoA = propanoyl-CoA + AMP + diphosphate. It carries out the reaction a medium-chain fatty acid + ATP + CoA = a medium-chain fatty acyl-CoA + AMP + diphosphate. In terms of biological role, catalyzes the ligation of coenzyme A (CoA) to 4-hydroxybutyrate (4HB). It can also use butyrate, valerate, propionate, acetate and 3-hydroxybutyrate (3HB) as substrates. The polypeptide is 4-hydroxybutyrate--CoA ligase 2 (Metallosphaera sedula (strain ATCC 51363 / DSM 5348 / JCM 9185 / NBRC 15509 / TH2)).